The primary structure comprises 308 residues: Ecto-ADP-ribosyltransferase 5 (308 aa).

A signal peptide spans 1–23 (MILEDLLMVLSCLALHILWKVQA). An intrachain disulfide couples cysteine 43 to cysteine 259. The 191-residue stretch at 63–253 (ALLRESWEAA…IVTLWSYNQT (191 aa)) folds into the TR mART core domain. Tyrosine 100 contacts NAD(+). Asparagine 102 carries N-linked (GlcNAc...) asparagine glycosylation. NAD(+) contacts are provided by arginine 161 and glutamine 181. Arginine 161 is a catalytic residue. Residue serine 184 is part of the active site. Asparagine 197 carries an N-linked (GlcNAc...) asparagine glycan. Serine 215 contributes to the NAD(+) binding site. Glutamate 222 is an active-site residue. Asparagine 251 carries an N-linked (GlcNAc...) asparagine glycan.

Belongs to the Arg-specific ADP-ribosyltransferase family.

It is found in the secreted. It localises to the membrane. The catalysed reaction is L-arginyl-[protein] + NAD(+) = N(omega)-(ADP-D-ribosyl)-L-arginyl-[protein] + nicotinamide + H(+). This Rattus norvegicus (Rat) protein is Ecto-ADP-ribosyltransferase 5 (Art5).